Here is a 130-residue protein sequence, read N- to C-terminus: Small ribosomal subunit protein bS6 (130 aa).

The disordered stretch occupies residues 100–130 (SPMVKAKDERRERREDFAEAGDDVEAGDSEE). A compositionally biased stretch (basic and acidic residues) spans 104 to 116 (KAKDERRERREDF). A compositionally biased stretch (acidic residues) spans 117 to 130 (AEAGDDVEAGDSEE).

Belongs to the bacterial ribosomal protein bS6 family.

Binds together with bS18 to 16S ribosomal RNA. This is Small ribosomal subunit protein bS6 from Pectobacterium atrosepticum (strain SCRI 1043 / ATCC BAA-672) (Erwinia carotovora subsp. atroseptica).